A 505-amino-acid polypeptide reads, in one-letter code: MVSIRPDEISSILKQQITDYDQSVSVSNVGTVLQIGDGIARIYGLDQVMAGELLEFEDGTEGIALNLEDDNVGAVLMGEALGVQEGSNVKSTGKIASVPVGEAMQGRVVNPLGQPIDGKGEIPTSDTRLIEEMAPGIIKRRSVHEPMQTGITSIDAMIPVGRGQRELIIGDRQTGKSAIAIDTIINQKGQDVVCVYVAIGQKSASVANIVEVLRERGALDYTVVVSAGASEPAALQYLAPYTGAAIAEHFMYQGKATLVIYDDLTKQAQAYRQMSLLLKRPPGREAYPGDVFYLHSRLLERAAKLSDAMGGGSMTALPIIETQAGDVSAYIPTNVISITDGQIFLSADLFNSGLRPAINVGISVSRVGGAAQTKAIKKIAGTLKLELAQFDELAAFSQFASDLDEATQQQLERGKRLRELLKQPQFSPLNLAEQVAVVYAGVKGLIDEVPVEDVTKFATELREYLKLNKSEFIEEILKEKKLNDGLEATLKEVINEVKSSMLATV.

An ATP-binding site is contributed by 170 to 177 (GDRQTGKS).

The protein belongs to the ATPase alpha/beta chains family. F-type ATPases have 2 components, CF(1) - the catalytic core - and CF(0) - the membrane proton channel. CF(1) has five subunits: alpha(3), beta(3), gamma(1), delta(1), epsilon(1). CF(0) has four main subunits: a(1), b(1), b'(1) and c(9-12).

The protein localises to the cellular thylakoid membrane. It carries out the reaction ATP + H2O + 4 H(+)(in) = ADP + phosphate + 5 H(+)(out). Its function is as follows. Produces ATP from ADP in the presence of a proton gradient across the membrane. The alpha chain is a regulatory subunit. The chain is ATP synthase subunit alpha from Prochlorococcus marinus (strain AS9601).